The following is a 55-amino-acid chain: Large ribosomal subunit protein bL33 (55 aa).

Belongs to the bacterial ribosomal protein bL33 family.

The chain is Large ribosomal subunit protein bL33 from Bradyrhizobium sp. (strain BTAi1 / ATCC BAA-1182).